Consider the following 234-residue polypeptide: UDP-2,3-diacylglucosamine hydrolase (234 aa).

Asp-9, His-11, Asp-42, Asn-80, and His-115 together coordinate Mn(2+). 80–81 (NR) provides a ligand contact to substrate. Asp-123, Ser-161, Lys-165, Lys-168, and His-196 together coordinate substrate. Positions 196 and 198 each coordinate Mn(2+).

This sequence belongs to the LpxH family. The cofactor is Mn(2+).

It localises to the cell inner membrane. It carries out the reaction UDP-2-N,3-O-bis[(3R)-3-hydroxytetradecanoyl]-alpha-D-glucosamine + H2O = 2-N,3-O-bis[(3R)-3-hydroxytetradecanoyl]-alpha-D-glucosaminyl 1-phosphate + UMP + 2 H(+). It participates in glycolipid biosynthesis; lipid IV(A) biosynthesis; lipid IV(A) from (3R)-3-hydroxytetradecanoyl-[acyl-carrier-protein] and UDP-N-acetyl-alpha-D-glucosamine: step 4/6. Functionally, hydrolyzes the pyrophosphate bond of UDP-2,3-diacylglucosamine to yield 2,3-diacylglucosamine 1-phosphate (lipid X) and UMP by catalyzing the attack of water at the alpha-P atom. Involved in the biosynthesis of lipid A, a phosphorylated glycolipid that anchors the lipopolysaccharide to the outer membrane of the cell. This Haemophilus ducreyi (strain 35000HP / ATCC 700724) protein is UDP-2,3-diacylglucosamine hydrolase.